A 160-amino-acid chain; its full sequence is Transcription elongation factor GreA (160 aa).

The stretch at Ala53–Asn73 forms a coiled coil.

The protein belongs to the GreA/GreB family.

Its function is as follows. Necessary for efficient RNA polymerase transcription elongation past template-encoded arresting sites. The arresting sites in DNA have the property of trapping a certain fraction of elongating RNA polymerases that pass through, resulting in locked ternary complexes. Cleavage of the nascent transcript by cleavage factors such as GreA or GreB allows the resumption of elongation from the new 3'terminus. GreA releases sequences of 2 to 3 nucleotides. The protein is Transcription elongation factor GreA of Pseudomonas putida (strain ATCC 47054 / DSM 6125 / CFBP 8728 / NCIMB 11950 / KT2440).